Reading from the N-terminus, the 61-residue chain is Small ribosomal subunit protein uS14B (61 aa).

Cys-24, Cys-27, Cys-40, and Cys-43 together coordinate Zn(2+).

This sequence belongs to the universal ribosomal protein uS14 family. Zinc-binding uS14 subfamily. In terms of assembly, part of the 30S ribosomal subunit. Contacts proteins S3 and S10. Requires Zn(2+) as cofactor.

Functionally, binds 16S rRNA, required for the assembly of 30S particles and may also be responsible for determining the conformation of the 16S rRNA at the A site. The chain is Small ribosomal subunit protein uS14B from Mycobacterium bovis (strain ATCC BAA-935 / AF2122/97).